Consider the following 536-residue polypeptide: Chaperonin GroEL (536 aa).

Residues 29 to 32, 86 to 90, glycine 413, and aspartate 494 contribute to the ATP site; these read TLGP and DGTTT.

This sequence belongs to the chaperonin (HSP60) family. In terms of assembly, forms a cylinder of 14 subunits composed of two heptameric rings stacked back-to-back. Interacts with the co-chaperonin GroES.

The protein localises to the cytoplasm. The catalysed reaction is ATP + H2O + a folded polypeptide = ADP + phosphate + an unfolded polypeptide.. Functionally, together with its co-chaperonin GroES, plays an essential role in assisting protein folding. The GroEL-GroES system forms a nano-cage that allows encapsulation of the non-native substrate proteins and provides a physical environment optimized to promote and accelerate protein folding. This Acholeplasma laidlawii (strain PG-8A) protein is Chaperonin GroEL.